The sequence spans 298 residues: Tyrosine recombinase XerD (298 aa).

The 86-residue stretch at 3–88 (ALDHPLIDQF…GLRGFFRYLL (86 aa)) folds into the Core-binding (CB) domain. Residues 109-292 (PLPKSLSEAD…AKARLQQLHA (184 aa)) enclose the Tyr recombinase domain. Residues Arg149, Lys173, His244, Arg247, and His270 contribute to the active site. Tyr279 (O-(3'-phospho-DNA)-tyrosine intermediate) is an active-site residue.

It belongs to the 'phage' integrase family. XerD subfamily. Forms a cyclic heterotetrameric complex composed of two molecules of XerC and two molecules of XerD.

It is found in the cytoplasm. Site-specific tyrosine recombinase, which acts by catalyzing the cutting and rejoining of the recombining DNA molecules. The XerC-XerD complex is essential to convert dimers of the bacterial chromosome into monomers to permit their segregation at cell division. It also contributes to the segregational stability of plasmids. In Pseudomonas putida (strain ATCC 47054 / DSM 6125 / CFBP 8728 / NCIMB 11950 / KT2440), this protein is Tyrosine recombinase XerD.